The primary structure comprises 143 residues: Large ribosomal subunit protein uL11 (143 aa).

Belongs to the universal ribosomal protein uL11 family. Part of the ribosomal stalk of the 50S ribosomal subunit. Interacts with L10 and the large rRNA to form the base of the stalk. L10 forms an elongated spine to which L12 dimers bind in a sequential fashion forming a multimeric L10(L12)X complex. Post-translationally, one or more lysine residues are methylated.

In terms of biological role, forms part of the ribosomal stalk which helps the ribosome interact with GTP-bound translation factors. This is Large ribosomal subunit protein uL11 from Bordetella pertussis (strain Tohama I / ATCC BAA-589 / NCTC 13251).